A 637-amino-acid polypeptide reads, in one-letter code: Extracellular metalloproteinase 10 (637 aa).

Residues 1-19 (MHGLLLAATLLSLPFNAVA) form the signal peptide. Positions 20–245 (HVPPTTGLVR…VHNVVDYVAH (226 aa)) are excised as a propeptide. The N-linked (GlcNAc...) asparagine glycan is linked to asparagine 282. A Zn(2+)-binding site is contributed by histidine 429. Glutamate 430 is a catalytic residue. Position 433 (histidine 433) interacts with Zn(2+). The N-linked (GlcNAc...) asparagine glycan is linked to asparagine 502.

The protein belongs to the peptidase M36 family. The cofactor is Zn(2+).

The protein localises to the secreted. Functionally, secreted metalloproteinase that allows assimilation of proteinaceous substrates. The protein is Extracellular metalloproteinase 10 (MEP10) of Uncinocarpus reesii (strain UAMH 1704).